A 244-amino-acid polypeptide reads, in one-letter code: Lipid A 1-phosphatase (244 aa).

Transmembrane regions (helical) follow at residues 28–48 (LFVTLNAVILSMLLFDAPIGA), 60–80 (ELLTGFGDSAWLIYTSILLFF), 98–118 (ALYVSWIGAYLFFTVVFSGLL), 154–174 (FPSGHSTTVGAFFAAFALLFP), 178–198 (VAFIACAIWLGMTRVMVGAHY), and 201–221 (DVIAGLAFGAWFSLLTAIVFA).

Belongs to the lipid A LpxE 1-phosphatase family.

It is found in the cell inner membrane. It participates in bacterial outer membrane biogenesis; LPS lipid A biosynthesis. In terms of biological role, removes the 1-phosphate group from (tetraacyl) lipid A species, has no requirement for the Kdo(2) moiety of lipid A. Has no 4'-phosphatase activity. Reduces sensitivity of S.meliloti strain 1021 to the cationic antimicrobial peptide (CAMP) polymyxin B. This chain is Lipid A 1-phosphatase, found in Rhizobium johnstonii (strain DSM 114642 / LMG 32736 / 3841) (Rhizobium leguminosarum bv. viciae).